The primary structure comprises 729 residues: Glycine--tRNA ligase (729 aa).

Residues methionine 1–leucine 33 constitute a mitochondrion transit peptide. The WHEP-TRS domain occupies leucine 53–valine 109. Position 194 is an N6-acetyllysine (lysine 194). Glycine is bound at residue glutamate 289. Residues arginine 321–glutamate 323 and arginine 332–valine 333 each bind ATP. Glutamate 340 lines the glycine pocket. Tyrosine 443 carries the post-translational modification Phosphotyrosine. Glutamate 447–isoleucine 448 is a binding site for ATP. Residue lysine 491 is modified to N6-acetyllysine. Glutamate 566–serine 568 provides a ligand contact to glycine. Arginine 573 contacts ATP. Serine 690 is subject to Phosphoserine. At threonine 726 the chain carries Phosphothreonine.

The protein belongs to the class-II aminoacyl-tRNA synthetase family. In terms of assembly, homodimer.

It localises to the cytoplasm. It is found in the mitochondrion. The protein localises to the cell projection. The protein resides in the axon. Its subcellular location is the secreted. It localises to the extracellular exosome. The catalysed reaction is tRNA(Gly) + glycine + ATP = glycyl-tRNA(Gly) + AMP + diphosphate. It catalyses the reaction 2 ATP + H(+) = P(1),P(4)-bis(5'-adenosyl) tetraphosphate + diphosphate. Functionally, catalyzes the ATP-dependent ligation of glycine to the 3'-end of its cognate tRNA, via the formation of an aminoacyl-adenylate intermediate (Gly-AMP). Also produces diadenosine tetraphosphate (Ap4A), a universal pleiotropic signaling molecule needed for cell regulation pathways, by direct condensation of 2 ATPs. Thereby, may play a special role in Ap4A homeostasis. The chain is Glycine--tRNA ligase (Gars1) from Mus musculus (Mouse).